The primary structure comprises 307 residues: Melanoma-associated antigen F1 (307 aa).

A disordered region spans residues 1-55 (MLQTPESRGLPVPQAEGEKDGGHDGETRAPTASQERPKEELGAGREEGAAEPALT). 2 stretches are compositionally biased toward basic and acidic residues: residues 16–27 (EGEKDGGHDGET) and 35–48 (ERPK…REEG). The MAGE domain occupies 76–277 (LNRTVAELVQ…HWPVQYREAL (202 aa)).

In terms of assembly, interacts (via MAGE domain) with RING-type zinc finger-containing E3 ubiquitin-protein ligases LNX1, TRIM27 and NSMCE1; the interaction is direct. As to expression, ubiquitous.

Enhances ubiquitin ligase activity of RING-type zinc finger-containing E3 ubiquitin ligases. Proposed to act through recruitment and/or stabilization of the E2 ubiquitin-conjugating enzyme at the E3:substrate complex. MAGEF1-NSMCE1 ubiquitin ligase complex promotes proteasomal degradation of MMS19, a key component of the cytosolic iron-sulfur protein assembly (CIA) machinery. Down-regulation of MMS19 impairs the activity of several DNA repair and metabolism enzymes such as ERCC2/XPD, FANCJ, RTEL1 and POLD1 that require iron-sulfur clusters as cofactors. May negatively regulate genome integrity by inhibiting homologous recombination-mediated double-strand break DNA repair. In Homo sapiens (Human), this protein is Melanoma-associated antigen F1.